A 203-amino-acid chain; its full sequence is Nucleoside triphosphate pyrophosphatase (203 aa).

The active-site Proton acceptor is the Asp78.

It belongs to the Maf family. Requires a divalent metal cation as cofactor.

Its subcellular location is the cytoplasm. It catalyses the reaction a ribonucleoside 5'-triphosphate + H2O = a ribonucleoside 5'-phosphate + diphosphate + H(+). It carries out the reaction a 2'-deoxyribonucleoside 5'-triphosphate + H2O = a 2'-deoxyribonucleoside 5'-phosphate + diphosphate + H(+). Nucleoside triphosphate pyrophosphatase. May have a dual role in cell division arrest and in preventing the incorporation of modified nucleotides into cellular nucleic acids. The sequence is that of Nucleoside triphosphate pyrophosphatase from Prochlorococcus marinus (strain MIT 9301).